A 321-amino-acid polypeptide reads, in one-letter code: PI-PLC X domain-containing protein 3 (321 aa).

The PI-PLC X-box domain occupies 22–197 (SMHSIPLTNL…DYQVLVFYHS (176 aa)). Catalysis depends on residues histidine 37 and histidine 114.

As to expression, expressed at highest levels in heart. Also detected in kidney, lung, small intestine and colon. Expressed at very low levels, if any, in leukocytes, thymus and skeletal muscle.

Its subcellular location is the cytoplasm. The sequence is that of PI-PLC X domain-containing protein 3 (PLCXD3) from Homo sapiens (Human).